The sequence spans 71 residues: Long neurotoxin 5 (71 aa).

Cystine bridges form between Cys-3-Cys-20, Cys-14-Cys-41, Cys-26-Cys-30, Cys-45-Cys-56, and Cys-57-Cys-62.

The protein belongs to the three-finger toxin family. Long-chain subfamily. Type II alpha-neurotoxin sub-subfamily. As to expression, expressed by the venom gland.

The protein localises to the secreted. Its function is as follows. Binds with high affinity to muscular (alpha-1/CHRNA1) and neuronal (alpha-7/CHRNA7) nicotinic acetylcholine receptor (nAChR) and inhibits acetylcholine from binding to the receptor, thereby impairing neuromuscular and neuronal transmission. The protein is Long neurotoxin 5 of Naja naja (Indian cobra).